Reading from the N-terminus, the 365-residue chain is GDSL esterase/lipase At3g62280 (365 aa).

The signal sequence occupies residues 1-25 (MDYTVSSLQCFFLVLCLSLLVCSNS). Ser43 functions as the Nucleophile in the catalytic mechanism. Residues Asn137, Asn178, and Asn231 are each glycosylated (N-linked (GlcNAc...) asparagine). Residues Asp333 and His336 contribute to the active site.

This sequence belongs to the 'GDSL' lipolytic enzyme family.

The protein resides in the secreted. In Arabidopsis thaliana (Mouse-ear cress), this protein is GDSL esterase/lipase At3g62280.